A 366-amino-acid polypeptide reads, in one-letter code: tRNA/tmRNA (uracil-C(5))-methyltransferase (366 aa).

Residues glutamine 190, tyrosine 218, asparagine 223, glutamate 239, and aspartate 299 each contribute to the S-adenosyl-L-methionine site. Cysteine 324 acts as the Nucleophile in catalysis. The Proton acceptor role is filled by glutamate 358.

The protein belongs to the class I-like SAM-binding methyltransferase superfamily. RNA M5U methyltransferase family. TrmA subfamily.

It catalyses the reaction uridine(54) in tRNA + S-adenosyl-L-methionine = 5-methyluridine(54) in tRNA + S-adenosyl-L-homocysteine + H(+). It carries out the reaction uridine(341) in tmRNA + S-adenosyl-L-methionine = 5-methyluridine(341) in tmRNA + S-adenosyl-L-homocysteine + H(+). In terms of biological role, dual-specificity methyltransferase that catalyzes the formation of 5-methyluridine at position 54 (m5U54) in all tRNAs, and that of position 341 (m5U341) in tmRNA (transfer-mRNA). This chain is tRNA/tmRNA (uracil-C(5))-methyltransferase, found in Enterobacter sp. (strain 638).